Here is a 284-residue protein sequence, read N- to C-terminus: Protein phosphatase 1 regulatory subunit 3B (284 aa).

Positions Arg-61 to Phe-64 match the PP1-binding motif motif. The CBM21 domain occupies Arg-124–Thr-232. A Phosphoserine modification is found at Ser-260.

As to quaternary structure, interacts with glycogen, PPP1CC catalytic subunit of PP1 and PYGL. Associates with glycogen particles. Forms complexes with debranching enzyme, glycogen phosphorylase, glycogen synthase and phosphorylase kinase which is necessary for its regulation of PP1 activity. As to expression, highly expressed in liver. Moderately expressed in kidney, heart, testis, spleen and lung. Weakly expressed in skeletal muscle (at protein level). Expressed predominantly in liver. Expressed moderately in heart. Expressed weakly in lung, kidney, spleen and skeletal muscle.

Acts as a glycogen-targeting subunit for phosphatase PP1. Facilitates interaction of the PP1 with enzymes of the glycogen metabolism and regulates its activity. Suppresses the rate at which PP1 dephosphorylates (inactivates) glycogen phosphorylase and enhances the rate at which it activates glycogen synthase and therefore limits glycogen breakdown. Its activity is inhibited by PYGL, resulting in inhibition of the glycogen synthase and glycogen phosphorylase phosphatase activities of PP1. Dramatically increases basal and insulin-stimulated glycogen synthesis upon overexpression in hepatocytes. The chain is Protein phosphatase 1 regulatory subunit 3B (Ppp1r3b) from Rattus norvegicus (Rat).